The primary structure comprises 367 residues: Homoserine O-acetyltransferase (367 aa).

The AB hydrolase-1 domain occupies 44–350 (NAIMVTHAWT…AYGHDAFLLE (307 aa)). The active-site Nucleophile is the Ser150. Position 217 (Arg217) interacts with substrate. Catalysis depends on residues Asp311 and His344. A substrate-binding site is contributed by Asp345.

Belongs to the AB hydrolase superfamily. MetX family. In terms of assembly, homodimer.

The protein resides in the cytoplasm. The catalysed reaction is L-homoserine + acetyl-CoA = O-acetyl-L-homoserine + CoA. It functions in the pathway amino-acid biosynthesis; L-methionine biosynthesis via de novo pathway; O-acetyl-L-homoserine from L-homoserine: step 1/1. Functionally, transfers an acetyl group from acetyl-CoA to L-homoserine, forming acetyl-L-homoserine. The protein is Homoserine O-acetyltransferase of Geotalea daltonii (strain DSM 22248 / JCM 15807 / FRC-32) (Geobacter daltonii).